The primary structure comprises 253 residues: Triosephosphate isomerase, cytosolic (253 aa).

The substrate site is built by N10 and K12. Residue H96 is the Electrophile of the active site. E166 serves as the catalytic Proton acceptor.

This sequence belongs to the triosephosphate isomerase family. As to quaternary structure, homodimer.

The protein localises to the cytoplasm. It catalyses the reaction D-glyceraldehyde 3-phosphate = dihydroxyacetone phosphate. Its pathway is carbohydrate biosynthesis; gluconeogenesis. The protein operates within carbohydrate degradation; glycolysis; D-glyceraldehyde 3-phosphate from glycerone phosphate: step 1/1. In Coptis japonica (Japanese goldthread), this protein is Triosephosphate isomerase, cytosolic.